Consider the following 146-residue polypeptide: Hemoglobin subunit beta (146 aa).

The 145-residue stretch at 2 to 146 (FLTAEEKSLV…VANALAHKYH (145 aa)) folds into the Globin domain. At serine 44 the chain carries Phosphoserine. An N6-acetyllysine modification is found at lysine 59. Histidine 63 provides a ligand contact to heme b. At lysine 82 the chain carries N6-acetyllysine. Histidine 92 is a binding site for heme b. The residue at position 93 (cysteine 93) is an S-nitrosocysteine. N6-acetyllysine is present on lysine 144.

It belongs to the globin family. In terms of assembly, heterotetramer of two alpha chains and two beta chains. As to expression, red blood cells.

Involved in oxygen transport from the lung to the various peripheral tissues. The chain is Hemoglobin subunit beta (HBB) from Proteles cristata (Aardwolf).